Consider the following 180-residue polypeptide: ATP synthase subunit delta (180 aa).

The protein belongs to the ATPase delta chain family. F-type ATPases have 2 components, F(1) - the catalytic core - and F(0) - the membrane proton channel. F(1) has five subunits: alpha(3), beta(3), gamma(1), delta(1), epsilon(1). CF(0) has four main subunits: a(1), b(1), b'(1) and c(10-14). The alpha and beta chains form an alternating ring which encloses part of the gamma chain. F(1) is attached to F(0) by a central stalk formed by the gamma and epsilon chains, while a peripheral stalk is formed by the delta, b and b' chains.

Its subcellular location is the cellular thylakoid membrane. Functionally, f(1)F(0) ATP synthase produces ATP from ADP in the presence of a proton or sodium gradient. F-type ATPases consist of two structural domains, F(1) containing the extramembraneous catalytic core and F(0) containing the membrane proton channel, linked together by a central stalk and a peripheral stalk. During catalysis, ATP synthesis in the catalytic domain of F(1) is coupled via a rotary mechanism of the central stalk subunits to proton translocation. This protein is part of the stalk that links CF(0) to CF(1). It either transmits conformational changes from CF(0) to CF(1) or is implicated in proton conduction. This chain is ATP synthase subunit delta, found in Prochlorococcus marinus (strain MIT 9215).